The primary structure comprises 85 residues: Sec-independent protein translocase protein TatA (85 aa).

The chain crosses the membrane as a helical span at residues 1–21 (MGIFDWKHWLIILIVVVLVFG). The segment at 43 to 85 (VNTEEGENRPAEPQTGTSAGDTLNKTQTIEGQAQKVDTPVRKD) is disordered. A compositionally biased stretch (polar residues) spans 56-73 (QTGTSAGDTLNKTQTIEG).

It belongs to the TatA/E family. The Tat system comprises two distinct complexes: a TatABC complex, containing multiple copies of TatA, TatB and TatC subunits, and a separate TatA complex, containing only TatA subunits. Substrates initially bind to the TatABC complex, which probably triggers association of the separate TatA complex to form the active translocon.

The protein resides in the cell inner membrane. Its function is as follows. Part of the twin-arginine translocation (Tat) system that transports large folded proteins containing a characteristic twin-arginine motif in their signal peptide across membranes. TatA could form the protein-conducting channel of the Tat system. In Azotobacter vinelandii (strain DJ / ATCC BAA-1303), this protein is Sec-independent protein translocase protein TatA.